A 344-amino-acid polypeptide reads, in one-letter code: Protein pelota homolog (344 aa).

This sequence belongs to the eukaryotic release factor 1 family. Pelota subfamily. In terms of assembly, monomer. It depends on a divalent metal cation as a cofactor.

The protein resides in the cytoplasm. In terms of biological role, may function in recognizing stalled ribosomes, interact with stem-loop structures in stalled mRNA molecules, and effect endonucleolytic cleavage of the mRNA. May play a role in the release non-functional ribosomes and degradation of damaged mRNAs. Has endoribonuclease activity. In Saccharolobus islandicus (strain M.14.25 / Kamchatka #1) (Sulfolobus islandicus), this protein is Protein pelota homolog.